The following is a 284-amino-acid chain: Nodulation protein O (284 aa).

The interval 1–27 is disordered; it reads MNIKGSDNGSFIKGSPENDIIDGGKKN. Hemolysin-type calcium-binding repeat units follow at residues 13-30, 31-48, 58-75, 94-111, and 112-129; these read KGSPENDIIDGGKKNDWI, DAGNGDDRIKAGDGQDSI, WAGKGSDVIHADGGDDLL, HSGEGDDVLYAGPGSDIL, and VAGDGADVLTGGDDGDAF. Residues Asp100, Asp109, Asp118, and Asp127 each coordinate Ca(2+). The segment at 208-222 is export signal (aspartic acid box); that stretch reads DRGFASAAAAATAID.

It is found in the secreted. In terms of biological role, the NodO protein may play a role in nodule development by direct interaction with the root hair cells or some other plant surface in a calcium-dependent manner. The chain is Nodulation protein O (nodO) from Rhizobium leguminosarum bv. viciae.